We begin with the raw amino-acid sequence, 391 residues long: Sister chromatid cohesion protein DCC1 (391 aa).

The protein belongs to the DCC1 family. In terms of assembly, component of the ctf18-RFC complex which consists of ctf18, ctf8, dscc1 and the RFC complex.

The protein localises to the nucleus. In terms of biological role, loads pcna onto primed templates regulating velocity, spacing and restart activity of replication forks. May couple DNA replication to sister chromatid cohesion. The protein is Sister chromatid cohesion protein DCC1 (dscc1) of Danio rerio (Zebrafish).